A 352-amino-acid chain; its full sequence is Uroporphyrinogen decarboxylase (352 aa).

Substrate contacts are provided by residues 26–30 (RQAGR), D76, Y153, S208, and H323.

This sequence belongs to the uroporphyrinogen decarboxylase family. Homodimer.

The protein localises to the cytoplasm. It catalyses the reaction uroporphyrinogen III + 4 H(+) = coproporphyrinogen III + 4 CO2. Its pathway is porphyrin-containing compound metabolism; protoporphyrin-IX biosynthesis; coproporphyrinogen-III from 5-aminolevulinate: step 4/4. Catalyzes the decarboxylation of four acetate groups of uroporphyrinogen-III to yield coproporphyrinogen-III. This Synechococcus sp. (strain CC9902) protein is Uroporphyrinogen decarboxylase.